A 326-amino-acid chain; its full sequence is Target of rapamycin complex subunit LST8 (326 aa).

At Met1 the chain carries N-acetylmethionine. WD repeat units follow at residues 1–37, 40–80, 83–122, 126–165, and 168–207; these read MNTT…CTRT, HQDS…PIIS, GVSK…LQCQ, QVNA…NEQL, and EPEF…GDEV. Thr51 is subject to Phosphothreonine. A Glycyl lysine isopeptide (Lys-Gly) (interchain with G-Cter in SUMO3) cross-link involves residue Lys86. Glycyl lysine isopeptide (Lys-Gly) (interchain with G-Cter in SUMO3) cross-links involve residues Lys215, Lys245, and Lys261. Residues 218–257 form a WD 6 repeat; it reads AHTRYALQCRFSPDSTLLATCSADQTCKIWRTSNFSLMTE. The stretch at 268-309 is one WD 7 repeat; it reads SSRGWMWGCAFSGDSQYIVTASSDNLARLWCVETGEIKREYG. Lys305 is covalently cross-linked (Glycyl lysine isopeptide (Lys-Gly) (interchain with G-Cter in SUMO3); alternate). Glycyl lysine isopeptide (Lys-Gly) (interchain with G-Cter in ubiquitin); alternate cross-links involve residues Lys305 and Lys313. Lys313 participates in a covalent cross-link: Glycyl lysine isopeptide (Lys-Gly) (interchain with G-Cter in SUMO1); alternate.

This sequence belongs to the WD repeat LST8 family. Part of the mechanistic target of rapamycin complex 1 (mTORC1) which contains MTOR, MLST8 and RPTOR. mTORC1 associates with AKT1S1/PRAS40, which inhibits its activity. mTORC1 binds to and is inhibited by FKBP12-rapamycin. Within mTORC1, interacts directly with MTOR and RPTOR. Component of the mechanistic target of rapamycin complex 2 (mTORC2), consisting in two heterotretramers composed of MTOR, MLST8, RICTOR and MAPKAP1/SIN1. Contrary to mTORC1, mTORC2 does not bind to and is not sensitive to FKBP12-rapamycin. mTORC1 and mTORC2 associate with DEPTOR, which regulates their activity. Interacts with RHEB. Interacts with MEAK7. Interacts with SIK3. Interacts with SLC38A7; this interaction promotes the recruitment of mTORC1 to the lysosome and its subsequent activation. Post-translationally, phosphorylation at Thr-51 by CDK1 promotes ubiquitination by the SCF(FBXW7) complex, followed by degradation. Ubiquitination by the SCF(FBXW7) and SCF(FBXW11) complexes following phosphorylation at Thr-51 by CDK1, leads to its degradation by the proteasome. Ubiquitination at Lys-305 and Lys-313 by TRAF2 via 'Lys-63'-linked polyubiquitin chains inhibits formation of the mTORC2 complex, while promoting formation of the mTORC1 complex: ubiquitination disrupts the interaction between MLST8 and MAPKAP1/SIN1 to favor mTORC1 assembly. Deubiquitination at Lys-305 and Lys-313 by OTUD7B promotes MLST8 interaction with MAPKAP1/SIN1, facilitating mTORC2 assembly. In terms of processing, sumoylation with SUMO1, SUMO2 and SUMO3 promotes assembly of both mTORC1 and mTORC2 complexes. Expressed at highest levels in the brain and testis, followed by lung, heart, kidney, skeletal muscle, spleen and liver. Also expressed in epididymal, abdominal and brown fat, small intestine and pancreas.

It localises to the lysosome membrane. The protein localises to the cytoplasm. Subunit of both mTORC1 and mTORC2, which regulates cell growth and survival in response to nutrient and hormonal signals. mTORC1 is activated in response to growth factors or amino acids. In response to nutrients, mTORC1 is recruited to the lysosome membrane and promotes protein, lipid and nucleotide synthesis by phosphorylating several substrates, such as ribosomal protein S6 kinase (RPS6KB1 and RPS6KB2) and EIF4EBP1 (4E-BP1). In the same time, it inhibits catabolic pathways by phosphorylating the autophagy initiation components ULK1 and ATG13, as well as transcription factor TFEB, a master regulators of lysosomal biogenesis and autophagy. The mTORC1 complex is inhibited in response to starvation and amino acid depletion. Within mTORC1, MLST8 interacts directly with MTOR and enhances its kinase activity. In nutrient-poor conditions, stabilizes the MTOR-RPTOR interaction and favors RPTOR-mediated inhibition of MTOR activity. As part of the mTORC2 complex, transduces signals from growth factors to pathways involved in proliferation, cytoskeletal organization, lipogenesis and anabolic output. mTORC2 is also activated by growth factors, but seems to be nutrient-insensitive. In response to growth factors, mTORC2 phosphorylates and activates AGC protein kinase family members, including AKT (AKT1, AKT2 and AKT3), PKC (PRKCA, PRKCB and PRKCE) and SGK1. mTORC2 functions upstream of Rho GTPases to regulate the actin cytoskeleton, probably by activating one or more Rho-type guanine nucleotide exchange factors. mTORC2 promotes the serum-induced formation of stress-fibers or F-actin. mTORC2 plays a critical role in AKT1 activation by mediating phosphorylation of different sites depending on the context, such as 'Thr-450', 'Ser-473', 'Ser-477' or 'Thr-479', facilitating the phosphorylation of the activation loop of AKT1 on 'Thr-308' by PDPK1/PDK1 which is a prerequisite for full activation. mTORC2 regulates the phosphorylation of SGK1 at 'Ser-422'. mTORC2 also modulates the phosphorylation of PRKCA on 'Ser-657'. Within mTORC2, MLST8 acts as a bridge between MAPKAP1/SIN1 and MTOR. The polypeptide is Target of rapamycin complex subunit LST8 (Rattus norvegicus (Rat)).